We begin with the raw amino-acid sequence, 554 residues long: Glutamine--tRNA ligase (554 aa).

Positions 34-44 (PEPNGYLHIGH) match the 'HIGH' region motif. ATP contacts are provided by residues 35 to 37 (EPN) and 41 to 47 (HIGHAKS). L-glutamine-binding residues include aspartate 67 and tyrosine 212. ATP contacts are provided by residues threonine 231, 261 to 262 (RL), and 269 to 271 (MSK). The 'KMSKS' region motif lies at 268 to 272 (VMSKR). Positions 317–324 (TKQDNTIE) are interaction with tRNA.

The protein belongs to the class-I aminoacyl-tRNA synthetase family. In terms of assembly, monomer.

It is found in the cytoplasm. It carries out the reaction tRNA(Gln) + L-glutamine + ATP = L-glutaminyl-tRNA(Gln) + AMP + diphosphate. This chain is Glutamine--tRNA ligase, found in Shigella flexneri serotype 5b (strain 8401).